Consider the following 226-residue polypeptide: Urease accessory protein UreF (226 aa).

Belongs to the UreF family. In terms of assembly, ureD, UreF and UreG form a complex that acts as a GTP-hydrolysis-dependent molecular chaperone, activating the urease apoprotein by helping to assemble the nickel containing metallocenter of UreC. The UreE protein probably delivers the nickel.

It is found in the cytoplasm. Functionally, required for maturation of urease via the functional incorporation of the urease nickel metallocenter. The sequence is that of Urease accessory protein UreF from Burkholderia cenocepacia (strain ATCC BAA-245 / DSM 16553 / LMG 16656 / NCTC 13227 / J2315 / CF5610) (Burkholderia cepacia (strain J2315)).